Reading from the N-terminus, the 370-residue chain is tRNA/tmRNA (uracil-C(5))-methyltransferase (370 aa).

Residues Gln190, Tyr218, Asn223, Glu239, and Asp299 each coordinate S-adenosyl-L-methionine. Catalysis depends on Cys324, which acts as the Nucleophile. The Proton acceptor role is filled by Glu358.

The protein belongs to the class I-like SAM-binding methyltransferase superfamily. RNA M5U methyltransferase family. TrmA subfamily.

The enzyme catalyses uridine(54) in tRNA + S-adenosyl-L-methionine = 5-methyluridine(54) in tRNA + S-adenosyl-L-homocysteine + H(+). The catalysed reaction is uridine(341) in tmRNA + S-adenosyl-L-methionine = 5-methyluridine(341) in tmRNA + S-adenosyl-L-homocysteine + H(+). Functionally, dual-specificity methyltransferase that catalyzes the formation of 5-methyluridine at position 54 (m5U54) in all tRNAs, and that of position 341 (m5U341) in tmRNA (transfer-mRNA). The protein is tRNA/tmRNA (uracil-C(5))-methyltransferase of Sodalis glossinidius (strain morsitans).